Here is a 128-residue protein sequence, read N- to C-terminus: Small ribosomal subunit protein uS11 (128 aa).

This sequence belongs to the universal ribosomal protein uS11 family. In terms of assembly, part of the 30S ribosomal subunit. Interacts with proteins S7 and S18. Binds to IF-3.

Its function is as follows. Located on the platform of the 30S subunit, it bridges several disparate RNA helices of the 16S rRNA. Forms part of the Shine-Dalgarno cleft in the 70S ribosome. This is Small ribosomal subunit protein uS11 from Acinetobacter baylyi (strain ATCC 33305 / BD413 / ADP1).